We begin with the raw amino-acid sequence, 727 residues long: Prolyl endopeptidase-like (727 aa).

N-acetylmethionine is present on methionine 1. Active-site charge relay system residues include serine 559, aspartate 645, and histidine 690.

This sequence belongs to the peptidase S9A family. As to quaternary structure, homodimer. Interacts with the AP-1 complex. Expressed in pyramidal neurons of the temporal cortex and neocortex (at protein level). Widely expressed. Expressed at higher level in brain, skeletal muscle, heart and kidney. Expressed at the endplates in the neuromuscular junction.

It is found in the cytoplasm. Its subcellular location is the cytosol. It localises to the golgi apparatus. The protein resides in the trans-Golgi network. The protein localises to the cytoskeleton. It is found in the nucleus. With respect to regulation, inhibited by PMSF and Prefabloc, as well as leupeptin at high concentrations. Partially inhibited by TPCK, a chymotrypsin inhibitor and E64, a cysteine protease inhibitor. Not affected by 4-amidinophenyl-methanesulfonyl fluoride (APMSF), pepstatin or EDTA. Inhibited by 1-isobutyl-3-oxo-3,5,6,7-tetrahydro-2H-cyclopenta[c]pyridine-4-carbonitrile. In terms of biological role, serine peptidase whose precise substrate specificity remains unclear. Does not cleave peptides after a arginine or lysine residue. Regulates trans-Golgi network morphology and sorting by regulating the membrane binding of the AP-1 complex. May play a role in the regulation of synaptic vesicle exocytosis. This chain is Prolyl endopeptidase-like (PREPL), found in Homo sapiens (Human).